Consider the following 163-residue polypeptide: SKP1-like protein 4 (163 aa).

Residues 105-163 (ILAANYLNIGGLLDLTCKAVADQMRGKTPEQMRAHFNIKNDYTPEEEAEVRNENKWAFE) are interaction with the F-box domain of F-box proteins.

Belongs to the SKP1 family. As to quaternary structure, part of a SCF (SKP1-cullin-F-box) protein ligase complex. Interacts with At1g56610, At1g67340, At3g62230, At3g59000, At4g27050, At1g55000, SKIP16 and SKIP32. In terms of tissue distribution, mostly expressed in inflorescence and siliques, and, to a lower extent, in seedlings, roots, and stems.

The protein localises to the nucleus. Its pathway is protein modification; protein ubiquitination. Its function is as follows. Involved in ubiquitination and subsequent proteasomal degradation of target proteins. Together with CUL1, RBX1 and a F-box protein, it forms a SCF E3 ubiquitin ligase complex. The functional specificity of this complex depends on the type of F-box protein. In the SCF complex, it serves as an adapter that links the F-box protein to CUL1. In Arabidopsis thaliana (Mouse-ear cress), this protein is SKP1-like protein 4 (ASK4).